The sequence spans 269 residues: Cytochrome c oxidase subunit 3 (269 aa).

Transmembrane regions (helical) follow at residues Pro21 to Met41, Ile45 to Trp65, Gly90 to Phe110, Val127 to Ala147, Ala167 to Ile187, Val204 to Ala224, and Ile247 to Trp267.

Belongs to the cytochrome c oxidase subunit 3 family. In terms of assembly, component of the cytochrome c oxidase (complex IV, CIV), a multisubunit enzyme composed of a catalytic core of 3 subunits and several supernumerary subunits. The complex exists as a monomer or a dimer and forms supercomplexes (SCs) in the inner mitochondrial membrane with ubiquinol-cytochrome c oxidoreductase (cytochrome b-c1 complex, complex III, CIII).

The protein localises to the mitochondrion inner membrane. The catalysed reaction is 4 Fe(II)-[cytochrome c] + O2 + 8 H(+)(in) = 4 Fe(III)-[cytochrome c] + 2 H2O + 4 H(+)(out). Component of the cytochrome c oxidase, the last enzyme in the mitochondrial electron transport chain which drives oxidative phosphorylation. The respiratory chain contains 3 multisubunit complexes succinate dehydrogenase (complex II, CII), ubiquinol-cytochrome c oxidoreductase (cytochrome b-c1 complex, complex III, CIII) and cytochrome c oxidase (complex IV, CIV), that cooperate to transfer electrons derived from NADH and succinate to molecular oxygen, creating an electrochemical gradient over the inner membrane that drives transmembrane transport and the ATP synthase. Cytochrome c oxidase is the component of the respiratory chain that catalyzes the reduction of oxygen to water. Electrons originating from reduced cytochrome c in the intermembrane space (IMS) are transferred via the dinuclear copper A center (CU(A)) of subunit 2 and heme A of subunit 1 to the active site in subunit 1, a binuclear center (BNC) formed by heme A3 and copper B (CU(B)). The BNC reduces molecular oxygen to 2 water molecules using 4 electrons from cytochrome c in the IMS and 4 protons from the mitochondrial matrix. The protein is Cytochrome c oxidase subunit 3 (COX3) of Wickerhamomyces canadensis (Yeast).